A 299-amino-acid polypeptide reads, in one-letter code: Ankyrin repeat domain-containing protein 54 (299 aa).

The interval 1–32 (MAAAAGGADDESRSGRSSSDGECAVAPEPLTG) is disordered. Position 2 is an N-acetylalanine (Ala-2). Phosphoserine is present on residues Ser-57 and Ser-62. Positions 98 to 116 (RRLGPTGKEVHALKRLRDS) match the Nuclear localization signal (NLS) motif. ANK repeat units lie at residues 108-137 (HALKRLRDSANANDVETVQQLLEEGTDPCA), 141-170 (KGRTALHFASCNGNDQIVQLLLDHGADPNQ), 174-203 (LGNTPLHLAACTNHAPVITTLLRGGARVDA), and 207-239 (AGRTPLHLAKSKLNILQEGHSQCLEAVRLEVKQ). The LYN-binding stretch occupies residues 140–240 (DKGRTALHFA…EAVRLEVKQI (101 aa)). The short motif at 282–292 (LLASFTSLSLQ) is the Nuclear export signal (NES) element.

In terms of assembly, interacts (via ankyrin repeat region) with LYN (via SH3-domain) in an activation-independent status of LYN. Forms a multiprotein complex with LYN and HCLS1. Interacts with TSN2, VAV1, DBNL and LASP1.

Its subcellular location is the nucleus. It is found in the cytoplasm. The protein resides in the midbody. Its function is as follows. Plays an important role in regulating intracellular signaling events associated with erythroid terminal differentiation. This chain is Ankyrin repeat domain-containing protein 54 (ANKRD54), found in Bos taurus (Bovine).